A 133-amino-acid polypeptide reads, in one-letter code: ATP synthase epsilon chain (133 aa).

Belongs to the ATPase epsilon chain family. In terms of assembly, F-type ATPases have 2 components, CF(1) - the catalytic core - and CF(0) - the membrane proton channel. CF(1) has five subunits: alpha(3), beta(3), gamma(1), delta(1), epsilon(1). CF(0) has three main subunits: a, b and c.

The protein resides in the cell inner membrane. Produces ATP from ADP in the presence of a proton gradient across the membrane. This is ATP synthase epsilon chain from Maricaulis maris (strain MCS10) (Caulobacter maris).